A 199-amino-acid polypeptide reads, in one-letter code: Chaperone protein TorD (199 aa).

This sequence belongs to the TorD/DmsD family. TorD subfamily.

The protein resides in the cytoplasm. Its function is as follows. Involved in the biogenesis of TorA. Acts on TorA before the insertion of the molybdenum cofactor and, as a result, probably favors a conformation of the apoenzyme that is competent for acquiring the cofactor. The polypeptide is Chaperone protein TorD (Escherichia coli O45:K1 (strain S88 / ExPEC)).